Consider the following 421-residue polypeptide: Histidine--tRNA ligase (421 aa).

This sequence belongs to the class-II aminoacyl-tRNA synthetase family. Homodimer.

Its subcellular location is the cytoplasm. It catalyses the reaction tRNA(His) + L-histidine + ATP = L-histidyl-tRNA(His) + AMP + diphosphate + H(+). The sequence is that of Histidine--tRNA ligase from Francisella tularensis subsp. novicida (strain U112).